Here is a 238-residue protein sequence, read N- to C-terminus: Uridylate kinase (238 aa).

Position 12 to 15 (12 to 15) interacts with ATP; sequence KLSG. Gly-54 lines the UMP pocket. 2 residues coordinate ATP: Gly-55 and Arg-59. UMP is bound by residues Asp-74 and 135–142; that span reads TGNPFFTT. 3 residues coordinate ATP: Thr-162, Tyr-168, and Asp-171.

The protein belongs to the UMP kinase family. As to quaternary structure, homohexamer.

The protein localises to the cytoplasm. It catalyses the reaction UMP + ATP = UDP + ADP. The protein operates within pyrimidine metabolism; CTP biosynthesis via de novo pathway; UDP from UMP (UMPK route): step 1/1. Inhibited by UTP. In terms of biological role, catalyzes the reversible phosphorylation of UMP to UDP. The sequence is that of Uridylate kinase from Aromatoleum aromaticum (strain DSM 19018 / LMG 30748 / EbN1) (Azoarcus sp. (strain EbN1)).